The primary structure comprises 225 residues: Small ribosomal subunit protein uS2 (225 aa).

Over residues methionine 1–alanine 14 the composition is skewed to basic and acidic residues. The segment at methionine 1 to glycine 33 is disordered.

It belongs to the universal ribosomal protein uS2 family.

The sequence is that of Small ribosomal subunit protein uS2 from Methanosarcina barkeri (strain Fusaro / DSM 804).